Reading from the N-terminus, the 262-residue chain is Thrombin-like enzyme gyroxin B1.3 (262 aa).

A signal peptide spans 1–18 (MVLIRVLANLLILQLSYA). The propeptide occupies 19 to 262 (QKSSELVIGG…AGSETVNCPS (244 aa)). The Peptidase S1 domain occupies 25–253 (VIGGDECNIN…HLDWIQNIIA (229 aa)). Disulfide bonds link C31/C165, C52/C68, C102/C260, C144/C214, C176/C193, and C204/C229. Residue H67 is the Charge relay system of the active site. N105 is a glycosylation site (N-linked (GlcNAc...) asparagine). D112 serves as the catalytic Charge relay system. The active-site Charge relay system is the S208.

It belongs to the peptidase S1 family. Snake venom subfamily. As to quaternary structure, monomer. Expressed by the venom gland.

It is found in the secreted. Thrombin-like snake venom serine protease. Displays a specificity similar to trypsin. Releases only fibrinopeptide A in the conversion of fibrinogen to fibrin. Reversibly increases the permeability of the blood brain barrier (BBB) in mice. Induces the barrel rotation syndrome in mice, which is manifested by gyroxin-like, rapid rolling motions. This syndrome may be due to its effect on BBB permeability, and certainly also to other actions affecting endogenous substrates present in the endothelium, nervous tissues or blood. Also shows a moderate inhibitory activity on the human voltage-gated potassium channel Kv10.1/KCNH1/EAG1 (58% current inhibition at 5 uM). It blocks Kv10.1/KCNH1/EAG1 in a time and dose-dependent manner and with a mechanism independent of its enzymatic activity. It may have a preference in interacting with Kv10.1/KCNH1/EAG1 in its closed state, since the inhibitory effect of the toxin is decreased at more depolarized potentials. The polypeptide is Thrombin-like enzyme gyroxin B1.3 (Crotalus durissus terrificus (South American rattlesnake)).